A 512-amino-acid polypeptide reads, in one-letter code: Ribonuclease Y (512 aa).

The helical transmembrane segment at 3 to 23 (FQIILVVIISALVGLVIGFFI) threads the bilayer. The KH domain maps to 202 to 265 (TVAVIPLPND…EVARLALERL (64 aa)). Residues 328–421 (VLKHSIEVCH…VQAADAISAA (94 aa)) enclose the HD domain.

This sequence belongs to the RNase Y family.

The protein resides in the cell membrane. Its function is as follows. Endoribonuclease that initiates mRNA decay. In Desulforamulus reducens (strain ATCC BAA-1160 / DSM 100696 / MI-1) (Desulfotomaculum reducens), this protein is Ribonuclease Y.